A 123-amino-acid chain; its full sequence is NADH-quinone oxidoreductase subunit A (123 aa).

The next 3 membrane-spanning stretches (helical) occupy residues 11–31 (FPVL…VSIG), 67–87 (LVAI…PWGV), and 92–112 (IGWP…LGFA).

The protein belongs to the complex I subunit 3 family. As to quaternary structure, NDH-1 is composed of 14 different subunits. Subunits NuoA, H, J, K, L, M, N constitute the membrane sector of the complex.

Its subcellular location is the cell inner membrane. It catalyses the reaction a quinone + NADH + 5 H(+)(in) = a quinol + NAD(+) + 4 H(+)(out). Functionally, NDH-1 shuttles electrons from NADH, via FMN and iron-sulfur (Fe-S) centers, to quinones in the respiratory chain. The immediate electron acceptor for the enzyme in this species is believed to be ubiquinone. Couples the redox reaction to proton translocation (for every two electrons transferred, four hydrogen ions are translocated across the cytoplasmic membrane), and thus conserves the redox energy in a proton gradient. The polypeptide is NADH-quinone oxidoreductase subunit A (Paraburkholderia phymatum (strain DSM 17167 / CIP 108236 / LMG 21445 / STM815) (Burkholderia phymatum)).